The following is a 712-amino-acid chain: Cyclomaltodextrin glucanotransferase (712 aa).

Residues methionine 1–alanine 27 form the signal peptide. The A1 stretch occupies residues alanine 28 to proline 165. The Ca(2+) site is built by aspartate 54, asparagine 56, asparagine 59, and asparagine 60. Cysteine 70 and cysteine 77 form a disulfide bridge. Ca(2+) is bound by residues glycine 78 and aspartate 80. Tyrosine 127–tryptophan 128 contributes to the substrate binding site. Asparagine 166 is a Ca(2+) binding site. Residues asparagine 166 to histidine 229 are b. Histidine 167 contacts substrate. Isoleucine 217 contributes to the Ca(2+) binding site. A substrate-binding site is contributed by asparagine 220–aspartate 223. Aspartate 226 lines the Ca(2+) pocket. The A2 stretch occupies residues asparagine 230–tyrosine 433. Residue arginine 254 participates in substrate binding. Aspartate 256 functions as the Nucleophile in the catalytic mechanism. Residue lysine 259 to histidine 260 coordinates substrate. Histidine 260 contributes to the Ca(2+) binding site. Glutamate 284 (proton donor) is an active-site residue. Residues histidine 354, aspartate 398, and arginine 402 each contribute to the substrate site. The segment at glycine 434 to aspartate 522 is c. A d region spans residues alanine 523–leucine 608. The IPT/TIG domain maps to proline 526–glutamate 606. One can recognise a CBM20 domain in the interval valine 607 to proline 712. Residues threonine 609–proline 712 form an e region.

This sequence belongs to the glycosyl hydrolase 13 family. As to quaternary structure, monomer. Requires Ca(2+) as cofactor.

It localises to the secreted. The enzyme catalyses Cyclizes part of a (1-&gt;4)-alpha-D-glucan chain by formation of a (1-&gt;4)-alpha-D-glucosidic bond.. This Bacillus sp. (strain 38-2) protein is Cyclomaltodextrin glucanotransferase (cgt).